The sequence spans 225 residues: 2-phytyl-1,4-naphtoquinone methyltransferase (225 aa).

The protein belongs to the class I-like SAM-binding methyltransferase superfamily. MenG/UbiE family.

The enzyme catalyses demethylphylloquinol + S-adenosyl-L-methionine = phylloquinol + S-adenosyl-L-homocysteine + H(+). It participates in cofactor biosynthesis; phylloquinone biosynthesis. Functionally, methyltransferase required for the conversion of 2-phytyl-1,4-beta-naphthoquinol to phylloquinol. The sequence is that of 2-phytyl-1,4-naphtoquinone methyltransferase from Thermosynechococcus vestitus (strain NIES-2133 / IAM M-273 / BP-1).